A 66-amino-acid chain; its full sequence is Cold shock protein CspC (66 aa).

One can recognise a CSD domain in the interval 4–63 (GTVKWFNAEKGFGFIERENGDDVFVHFSAIQSDGFKSLDEGQKVSFDVEQGARGAQAANV).

The protein localises to the cytoplasm. The sequence is that of Cold shock protein CspC (cspC) from Bacillus subtilis (strain 168).